We begin with the raw amino-acid sequence, 194 residues long: Potassium-transporting ATPase KdpC subunit (194 aa).

The helical transmembrane segment at 12 to 34 (LFLLLLTGGVYPLLTTALGQWWF) threads the bilayer.

This sequence belongs to the KdpC family. As to quaternary structure, the system is composed of three essential subunits: KdpA, KdpB and KdpC.

Its subcellular location is the cell inner membrane. Part of the high-affinity ATP-driven potassium transport (or Kdp) system, which catalyzes the hydrolysis of ATP coupled with the electrogenic transport of potassium into the cytoplasm. This subunit acts as a catalytic chaperone that increases the ATP-binding affinity of the ATP-hydrolyzing subunit KdpB by the formation of a transient KdpB/KdpC/ATP ternary complex. The protein is Potassium-transporting ATPase KdpC subunit of Salmonella schwarzengrund (strain CVM19633).